The following is a 262-amino-acid chain: Dihydroorotate dehydrogenase B (NAD(+)), electron transfer subunit (262 aa).

The region spanning Gln3–Val104 is the FAD-binding FR-type domain. FAD contacts are provided by residues Arg53–Ser56, Leu70–Arg72, and Gly79–Thr80. [2Fe-2S] cluster-binding residues include Cys226, Cys231, Cys234, and Cys249.

Belongs to the PyrK family. Heterotetramer of 2 PyrK and 2 PyrD type B subunits. Requires [2Fe-2S] cluster as cofactor. FAD is required as a cofactor.

Its pathway is pyrimidine metabolism; UMP biosynthesis via de novo pathway; orotate from (S)-dihydroorotate (NAD(+) route): step 1/1. In terms of biological role, responsible for channeling the electrons from the oxidation of dihydroorotate from the FMN redox center in the PyrD type B subunit to the ultimate electron acceptor NAD(+). This is Dihydroorotate dehydrogenase B (NAD(+)), electron transfer subunit from Lactococcus lactis subsp. cremoris (strain SK11).